The following is a 152-amino-acid chain: MVKAVAVLTGSEGVQGTVFFAQEGEGPTTITGSLSGLKPGLHGFHVHALGDTTNGCMSTGPHFNPAGKEHGAPEDGNRHAGDLGNVTVGEDGTVNFTVTDSQIPLTGLNSVVGRAVVVHADSDDLGKGGHELSKTTGNAGGRLACGVIGLQA.

3 residues coordinate Cu cation: H45, H47, and H62. A disulfide bond links C56 and C145. Residues H62, H70, H79, and D82 each contribute to the Zn(2+) site. H119 lines the Cu cation pocket.

Belongs to the Cu-Zn superoxide dismutase family. In terms of assembly, homodimer. The cofactor is Cu cation. It depends on Zn(2+) as a cofactor.

The protein resides in the cytoplasm. The enzyme catalyses 2 superoxide + 2 H(+) = H2O2 + O2. Destroys radicals which are normally produced within the cells and which are toxic to biological systems. This is Superoxide dismutase [Cu-Zn] (SODCC) from Zantedeschia aethiopica (White calla lily).